The following is a 195-amino-acid chain: MQAIKCVVVGDGAVGKTCLLLSYTTNAFPGEYILTVFDTYSTNVMVDGRPINLSLWDTAGQDDYDQFRHLSFPQTDVFLVCFALNNPASFENVRAKWYPEVSHHCPNTPIILVGTKADLREDRDTIERLRERRLQPVSHTQGYVMAKEIKAVKYLECSALTQIGLKQVFDEAIRTGLTPPQTPQTRAKKSNCTVL.

10 to 17 lines the GTP pocket; sequence GDGAVGKT. Residues 32-40 carry the Effector region motif; the sequence is YILTVFDTY. Residues 57–61 and 115–118 contribute to the GTP site; these read DTAGQ and TKAD. Positions 176-195 are disordered; the sequence is GLTPPQTPQTRAKKSNCTVL. The residue at position 192 (Cys192) is a Cysteine methyl ester. Cys192 carries the S-geranylgeranyl cysteine lipid modification. A propeptide spans 193–195 (removed in mature form); it reads TVL.

The protein belongs to the small GTPase superfamily. Rho family.

It is found in the cell membrane. During gonad morphogenesis, plays a role in distal tip cell (DTC)-mediated guidance of gonad elongation. The sequence is that of Ras-related protein rac-2 (rac-2) from Caenorhabditis elegans.